The sequence spans 274 residues: UPF0173 metal-dependent hydrolase Adeh_1068 (274 aa).

It belongs to the UPF0173 family.

This Anaeromyxobacter dehalogenans (strain 2CP-C) protein is UPF0173 metal-dependent hydrolase Adeh_1068.